Consider the following 331-residue polypeptide: Probable cytosolic iron-sulfur protein assembly protein Ciao1 (331 aa).

WD repeat units lie at residues 12–51 (GHKG…WTTK), 57–96 (GHKR…ATLE), 97–136 (GHEN…EFEC), 142–181 (AHTQ…SDWD), 188–227 (SHTS…NEAG), 246–285 (QHSR…KRDE), and 297–331 (AHEQ…KLQE).

It belongs to the WD repeat CIA1 family.

Functionally, essential component of the cytosolic iron-sulfur (Fe/S) protein assembly machinery. Required for the maturation of extramitochondrial Fe/S proteins. The chain is Probable cytosolic iron-sulfur protein assembly protein Ciao1 from Drosophila grimshawi (Hawaiian fruit fly).